Consider the following 111-residue polypeptide: Cytochrome c (111 aa).

An N-acetylalanine modification is found at Ala-1. Heme c contacts are provided by Cys-22, Cys-25, and His-26. An N6,N6,N6-trimethyllysine modification is found at Lys-80. Met-88 serves as a coordination point for heme c. N6,N6,N6-trimethyllysine is present on Lys-94.

Belongs to the cytochrome c family. Binds 1 heme c group covalently per subunit.

The protein localises to the mitochondrion intermembrane space. Functionally, electron carrier protein. The oxidized form of the cytochrome c heme group can accept an electron from the heme group of the cytochrome c1 subunit of cytochrome reductase. Cytochrome c then transfers this electron to the cytochrome oxidase complex, the final protein carrier in the mitochondrial electron-transport chain. The sequence is that of Cytochrome c from Brassica napus (Rape).